We begin with the raw amino-acid sequence, 62 residues long: Putative antitoxin AF_1095 (62 aa).

Belongs to the UPF0165 family.

Its function is as follows. Possibly the antitoxin component of a type II toxin-antitoxin (TA) system. This is Putative antitoxin AF_1095 from Archaeoglobus fulgidus (strain ATCC 49558 / DSM 4304 / JCM 9628 / NBRC 100126 / VC-16).